The following is an 84-amino-acid chain: Acyl carrier protein (84 aa).

One can recognise a Carrier domain in the interval 1 to 75 (MIFQKIQEFI…DILEYIQQHV (75 aa)). Position 35 is an O-(pantetheine 4'-phosphoryl)serine (Ser-35).

This sequence belongs to the acyl carrier protein (ACP) family. Post-translationally, 4'-phosphopantetheine is transferred from CoA to a specific serine of apo-ACP by AcpS. This modification is essential for activity because fatty acids are bound in thioester linkage to the sulfhydryl of the prosthetic group.

The protein localises to the cytoplasm. The protein operates within lipid metabolism; fatty acid biosynthesis. In terms of biological role, carrier of the growing fatty acid chain in fatty acid biosynthesis. This chain is Acyl carrier protein, found in Phytoplasma mali (strain AT).